We begin with the raw amino-acid sequence, 1308 residues long: Cilia- and flagella-associated protein 57 C (1308 aa).

WD repeat units lie at residues N57–N99, Y110–G154, N415–S454, S504–Q546, G551–Q590, L645–T689, and H694–M733. Residues L779–I1000 adopt a coiled-coil conformation.

It belongs to the CFAP57 family. Forms a heterodimer with CFAP57A. Associates with components of the nexin-dynein regulatory complex (N-DRC) and the CFAP184:CFAP263 complex.

The protein resides in the cell projection. It is found in the cilium. Its function is as follows. Associates with components of the nexin-dynein regulatory complex (N-DRC), a key regulator of ciliary/flagellar motility, and might act as an inner dynein arm (IDA) hub or linkage. This Tetrahymena thermophila (strain SB210) protein is Cilia- and flagella-associated protein 57 C (CFAP57C).